Reading from the N-terminus, the 30-residue chain is Trypsin inhibitor 2 (30 aa).

Cystine bridges form between C3–C20, C10–C22, and C16–C29.

Belongs to the protease inhibitor I7 (squash-type serine protease inhibitor) family.

The protein resides in the secreted. In terms of biological role, inhibits trypsin. This Luffa aegyptiaca (Sponge gourd) protein is Trypsin inhibitor 2.